The primary structure comprises 300 residues: MSIDLSKLLTERRNANSANIDTLSTVDMLTVINQEDQQVAQAITPYLPQIAEVVDKVAAALRAGGRLIYIGAGTSGRLGILDASECPPTFGTRPEQVVGIIAGGHKAILSAVENVEDNKAQGAMDLQNLNFSNRDVLVGLAASGRTPYVIGAMEYAHSQNAFVAIVSCNPHGEMAQLADVAITPVVGPEVVTGSTRLKAGTAQKLVLNMISTGAMIRIGKVYSNLMVDVEATNAKLIERQVSIVMEATDCDRATAQNALDACGRHCKTAIVMVLADLSAAEAQSLLAKNNGYIRKALSNT.

One can recognise an SIS domain in the interval valine 57–lysine 220. Glutamate 85 functions as the Proton donor in the catalytic mechanism. Glutamate 116 is an active-site residue.

Belongs to the GCKR-like family. MurNAc-6-P etherase subfamily. As to quaternary structure, homodimer.

The enzyme catalyses N-acetyl-D-muramate 6-phosphate + H2O = N-acetyl-D-glucosamine 6-phosphate + (R)-lactate. Its pathway is amino-sugar metabolism; 1,6-anhydro-N-acetylmuramate degradation. It functions in the pathway amino-sugar metabolism; N-acetylmuramate degradation. It participates in cell wall biogenesis; peptidoglycan recycling. In terms of biological role, specifically catalyzes the cleavage of the D-lactyl ether substituent of MurNAc 6-phosphate, producing GlcNAc 6-phosphate and D-lactate. Together with AnmK, is also required for the utilization of anhydro-N-acetylmuramic acid (anhMurNAc) either imported from the medium or derived from its own cell wall murein, and thus plays a role in cell wall recycling. In Klebsiella aerogenes (Enterobacter aerogenes), this protein is N-acetylmuramic acid 6-phosphate etherase.